The chain runs to 247 residues: ATP synthase subunit a, chloroplastic (247 aa).

Helical transmembrane passes span Gln38 to Val58, Val95 to Leu115, Ile134 to Thr154, Leu199 to Leu219, and Gly220 to Gly240.

It belongs to the ATPase A chain family. In terms of assembly, F-type ATPases have 2 components, CF(1) - the catalytic core - and CF(0) - the membrane proton channel. CF(1) has five subunits: alpha(3), beta(3), gamma(1), delta(1), epsilon(1). CF(0) has four main subunits: a, b, b' and c.

It is found in the plastid. The protein localises to the chloroplast thylakoid membrane. Functionally, key component of the proton channel; it plays a direct role in the translocation of protons across the membrane. The protein is ATP synthase subunit a, chloroplastic of Dioscorea elephantipes (Elephant's foot yam).